The primary structure comprises 475 residues: Probable phenylalanine--tRNA ligase alpha subunit (475 aa).

Residues 2 to 151 are contains the major tRNA-Phe binding sites; it reads TAVAQKIIEN…KRKLVSRRKK (150 aa). L-phenylalanine contacts are provided by residues Thr-309, 351 to 353, and Tyr-391; that span reads QVE. Glu-393 is a Mg(2+) binding site. Phe-417 provides a ligand contact to L-phenylalanine.

It belongs to the class-II aminoacyl-tRNA synthetase family. Phe-tRNA synthetase alpha subunit type 2 subfamily. In terms of assembly, tetramer of two alpha and two beta subunits. Requires Mg(2+) as cofactor.

Its subcellular location is the cytoplasm. It carries out the reaction tRNA(Phe) + L-phenylalanine + ATP = L-phenylalanyl-tRNA(Phe) + AMP + diphosphate + H(+). The polypeptide is Probable phenylalanine--tRNA ligase alpha subunit (Encephalitozoon cuniculi (strain GB-M1) (Microsporidian parasite)).